Here is a 329-residue protein sequence, read N- to C-terminus: Cathepsin K (329 aa).

Positions 1–15 (MWGLKVLLLPVVSFA) are cleaved as a signal peptide. The propeptide at 16-114 (LHPEEILDTQ…TLYIPDWEGR (99 aa)) is activation peptide. The N-linked (GlcNAc...) asparagine glycan is linked to asparagine 103. 2 cysteine pairs are disulfide-bonded: cysteine 136–cysteine 177 and cysteine 170–cysteine 210. Residue cysteine 139 is part of the active site. Asparagine 268 is a glycosylation site (N-linked (GlcNAc...) asparagine). Cysteine 269 and cysteine 318 are disulfide-bonded. Catalysis depends on residues histidine 276 and asparagine 296.

It belongs to the peptidase C1 family. In terms of tissue distribution, predominantly expressed in osteclasts (bones).

Its subcellular location is the lysosome. It localises to the secreted. It is found in the apical cell membrane. The catalysed reaction is Broad proteolytic activity. With small-molecule substrates and inhibitors, the major determinant of specificity is P2, which is preferably Leu, Met &gt; Phe, and not Arg.. In terms of biological role, thiol protease involved in osteoclastic bone resorption and may participate partially in the disorder of bone remodeling. Displays potent endoprotease activity against fibrinogen at acid pH. May play an important role in extracellular matrix degradation. Involved in the release of thyroid hormone thyroxine (T4) by limited proteolysis of TG/thyroglobulin in the thyroid follicle lumen. In Oryctolagus cuniculus (Rabbit), this protein is Cathepsin K (CTSK).